We begin with the raw amino-acid sequence, 351 residues long: Lipoyl synthase, mitochondrial (351 aa).

Positions 84, 89, 95, 115, 119, 122, and 330 each coordinate [4Fe-4S] cluster. In terms of domain architecture, Radical SAM core spans 100–319 (DKSKATATIM…QKRAMDMGFL (220 aa)).

This sequence belongs to the radical SAM superfamily. Lipoyl synthase family. [4Fe-4S] cluster serves as cofactor.

Its subcellular location is the mitochondrion. It catalyses the reaction [[Fe-S] cluster scaffold protein carrying a second [4Fe-4S](2+) cluster] + N(6)-octanoyl-L-lysyl-[protein] + 2 oxidized [2Fe-2S]-[ferredoxin] + 2 S-adenosyl-L-methionine + 4 H(+) = [[Fe-S] cluster scaffold protein] + N(6)-[(R)-dihydrolipoyl]-L-lysyl-[protein] + 4 Fe(3+) + 2 hydrogen sulfide + 2 5'-deoxyadenosine + 2 L-methionine + 2 reduced [2Fe-2S]-[ferredoxin]. It functions in the pathway protein modification; protein lipoylation via endogenous pathway; protein N(6)-(lipoyl)lysine from octanoyl-[acyl-carrier-protein]: step 2/2. Functionally, catalyzes the radical-mediated insertion of two sulfur atoms into the C-6 and C-8 positions of the octanoyl moiety bound to the lipoyl domains of lipoate-dependent enzymes, thereby converting the octanoylated domains into lipoylated derivatives. The sequence is that of Lipoyl synthase, mitochondrial from Yarrowia lipolytica (strain CLIB 122 / E 150) (Yeast).